The primary structure comprises 691 residues: Elongation factor G (691 aa).

Residues 8-282 enclose the tr-type G domain; it reads DRVRNIGIAA…AVVDYLPAPI (275 aa). GTP contacts are provided by residues 17–24, 81–85, and 135–138; these read AHIDAGKT, DTPGH, and NKMD.

Belongs to the TRAFAC class translation factor GTPase superfamily. Classic translation factor GTPase family. EF-G/EF-2 subfamily.

The protein resides in the cytoplasm. Functionally, catalyzes the GTP-dependent ribosomal translocation step during translation elongation. During this step, the ribosome changes from the pre-translocational (PRE) to the post-translocational (POST) state as the newly formed A-site-bound peptidyl-tRNA and P-site-bound deacylated tRNA move to the P and E sites, respectively. Catalyzes the coordinated movement of the two tRNA molecules, the mRNA and conformational changes in the ribosome. In Synechococcus sp. (strain RCC307), this protein is Elongation factor G.